The sequence spans 115 residues: Holo-[acyl-carrier-protein] synthase (115 aa).

Positions 8 and 50 each coordinate Mg(2+).

Belongs to the P-Pant transferase superfamily. AcpS family. Mg(2+) serves as cofactor.

Its subcellular location is the cytoplasm. It carries out the reaction apo-[ACP] + CoA = holo-[ACP] + adenosine 3',5'-bisphosphate + H(+). Its function is as follows. Transfers the 4'-phosphopantetheine moiety from coenzyme A to a Ser of acyl-carrier-protein. This chain is Holo-[acyl-carrier-protein] synthase, found in Cutibacterium acnes (strain DSM 16379 / KPA171202) (Propionibacterium acnes).